Consider the following 101-residue polypeptide: RNA-binding protein Hfq (101 aa).

The Sm domain maps to 9–68; sequence DPFLNALRRERVPVSIYLVNGIKLQGQVESFDQFVILLKNTVSQMVYKHAISTVVPSRPV. Residues 63–101 are disordered; the sequence is VPSRPVSHHSNNPSGSTNNYHGSNPSAPQQPQQDSDDAE. The segment covering 70–86 has biased composition (polar residues); the sequence is HHSNNPSGSTNNYHGSN.

This sequence belongs to the Hfq family. Homohexamer.

Its function is as follows. RNA chaperone that binds small regulatory RNA (sRNAs) and mRNAs to facilitate mRNA translational regulation in response to envelope stress, environmental stress and changes in metabolite concentrations. Also binds with high specificity to tRNAs. Positively regulates the expression of the yst gene for heat-stable enterotoxin (Y-ST). This Yersinia enterocolitica protein is RNA-binding protein Hfq.